The primary structure comprises 272 residues: tRNA pseudouridine synthase A (272 aa).

Asp-52 functions as the Nucleophile in the catalytic mechanism. Residue Tyr-110 participates in substrate binding.

This sequence belongs to the tRNA pseudouridine synthase TruA family. Homodimer.

The catalysed reaction is uridine(38/39/40) in tRNA = pseudouridine(38/39/40) in tRNA. Its function is as follows. Formation of pseudouridine at positions 38, 39 and 40 in the anticodon stem and loop of transfer RNAs. In Cupriavidus necator (strain ATCC 17699 / DSM 428 / KCTC 22496 / NCIMB 10442 / H16 / Stanier 337) (Ralstonia eutropha), this protein is tRNA pseudouridine synthase A.